The primary structure comprises 855 residues: E3 ubiquitin-protein ligase TRIM71 (855 aa).

Alanine 2 is modified (N-acetylalanine). The RING-type zinc finger occupies 12–94 (CLLCKEMCGS…ALKLRCPVCD (83 aa)). Low complexity predominate over residues 26–42 (SSNSSASSSSSQTSTSS). Disordered stretches follow at residues 26–48 (SSNS…GGGP) and 127–177 (EEPP…SPGS). A compositionally biased stretch (gly residues) spans 135 to 145 (RAGGGPGGAGG). Positions 147–157 (SNHRHHAHHPA) are enriched in basic residues. Residues 181–228 (RRPHGCSSCDEGNAASSRCLDCQEHLCDNCVRAHQRVRLTKDHYIERG) form a B box-type 1; atypical zinc finger. A B box-type 2 zinc finger spans residues 260–301 (ERLGFCQHHDDEVLHLYCDTCSVPICRECTLGRHGGHSFAYL). Residues cysteine 265, histidine 268, cysteine 288, and histidine 293 each coordinate Zn(2+). 2 coiled-coil regions span residues 314–352 (QLLA…SEVK) and 378–411 (QVKA…VLEE). A Filamin repeat occupies 466–567 (SSGAFAPLTK…IENSPFKVVV (102 aa)). NHL repeat units follow at residues 580 to 623 (GLSF…FKPC), 627 to 670 (HHKF…FTFE), 674 to 717 (LLKF…FGPD), 721 to 764 (LNKY…IHPD), 768 to 811 (ARFL…FEAN), and 815 to 855 (LCKF…ILIF).

Belongs to the TRIM/RBCC family. As to quaternary structure, interacts (via NHL repeats) with AGO2; the interaction increases in presence of RNA. Interacts with HSP90AA1. Interacts (via NHL repeats) with MOV10, PABPC1, PUM1, PUM2, STAU2, XRN1 and XRN2 in an RNA-dependent manner. Interacts with SHCBP1; leading to enhance its stability. Autoubiquitinated. As to expression, highly expressed in undifferentiated embryonic stem cells (ESCs). Expressed in the epiblast and in interfollicular epidermal stem cells during early development. Also expressed in male germ cells and in the reproductive tract. Highly expressed in neuroepithelial cells, and its expression declines as neurogenesis proceeds (at protein level). Expressed in ependymal cells of the brain.

It localises to the cytoplasm. The protein resides in the P-body. The enzyme catalyses S-ubiquitinyl-[E2 ubiquitin-conjugating enzyme]-L-cysteine + [acceptor protein]-L-lysine = [E2 ubiquitin-conjugating enzyme]-L-cysteine + N(6)-ubiquitinyl-[acceptor protein]-L-lysine.. It participates in protein modification; protein ubiquitination. E3 ubiquitin-protein ligase that cooperates with the microRNAs (miRNAs) machinery and promotes embryonic stem cells proliferation and maintenance. Binds to miRNAs and associates with AGO2, participating in post-transcriptional repression of transcripts such as CDKN1A. Facilitates the G1-S transition to promote rapid embryonic stem cell self-renewal by repressing CDKN1A expression. In addition, participates in post-transcriptional mRNA repression in a miRNA independent mechanism. Required to maintain proliferation and prevent premature differentiation of neural progenitor cells during early neural development: positively regulates FGF signaling by controlling the stability of SHCBP1. Specific regulator of miRNA biogenesis. miRNA Binds MIR29A hairpin and postranscriptionally modulates MIR29A levels, which indirectly regulates TET proteins expression. This is E3 ubiquitin-protein ligase TRIM71 (Trim71) from Mus musculus (Mouse).